A 173-amino-acid polypeptide reads, in one-letter code: Cell division protein SepF (173 aa).

The interval phenylalanine 31–leucine 82 is disordered. Composition is skewed to basic and acidic residues over residues aspartate 39–arginine 53 and serine 60–serine 72.

This sequence belongs to the SepF family. As to quaternary structure, homodimer. Interacts with FtsZ.

Its subcellular location is the cytoplasm. In terms of biological role, cell division protein that is part of the divisome complex and is recruited early to the Z-ring. Probably stimulates Z-ring formation, perhaps through the cross-linking of FtsZ protofilaments. Its function overlaps with FtsA. This Thermobifida fusca (strain YX) protein is Cell division protein SepF.